The sequence spans 245 residues: 2,3-bisphosphoglycerate-dependent phosphoglycerate mutase (245 aa).

Substrate is bound by residues 8-15 (RHGQSLWN), 21-22 (TG), R60, 87-90 (ERHY), K98, 114-115 (RR), and 183-184 (GN). The Tele-phosphohistidine intermediate role is filled by H9. The active-site Proton donor/acceptor is E87.

It belongs to the phosphoglycerate mutase family. BPG-dependent PGAM subfamily.

The catalysed reaction is (2R)-2-phosphoglycerate = (2R)-3-phosphoglycerate. Its pathway is carbohydrate degradation; glycolysis; pyruvate from D-glyceraldehyde 3-phosphate: step 3/5. Functionally, catalyzes the interconversion of 2-phosphoglycerate and 3-phosphoglycerate. The polypeptide is 2,3-bisphosphoglycerate-dependent phosphoglycerate mutase (Bacillus thuringiensis subsp. konkukian (strain 97-27)).